Consider the following 463-residue polypeptide: Phosphomethylpyrimidine synthase (463 aa).

Substrate contacts are provided by residues Asn-80, Met-109, Tyr-138, His-173, 193 to 195, 234 to 237, and Glu-273; these read SRG and DGLR. His-277 serves as a coordination point for Zn(2+). Tyr-300 is a binding site for substrate. Zn(2+) is bound at residue His-341. Residues Cys-421, Cys-424, and Cys-429 each contribute to the [4Fe-4S] cluster site.

The protein belongs to the ThiC family. In terms of assembly, homodimer. [4Fe-4S] cluster is required as a cofactor.

The catalysed reaction is 5-amino-1-(5-phospho-beta-D-ribosyl)imidazole + S-adenosyl-L-methionine = 4-amino-2-methyl-5-(phosphooxymethyl)pyrimidine + CO + 5'-deoxyadenosine + formate + L-methionine + 3 H(+). It participates in cofactor biosynthesis; thiamine diphosphate biosynthesis. Functionally, catalyzes the synthesis of the hydroxymethylpyrimidine phosphate (HMP-P) moiety of thiamine from aminoimidazole ribotide (AIR) in a radical S-adenosyl-L-methionine (SAM)-dependent reaction. This Anaeromyxobacter dehalogenans (strain 2CP-1 / ATCC BAA-258) protein is Phosphomethylpyrimidine synthase.